A 963-amino-acid chain; its full sequence is Phosphoenolpyruvate carboxylase 2 (963 aa).

Ser11 is modified (phosphoserine). Residues His172 and Lys599 contribute to the active site. The residue at position 701 (Ser701) is a Phosphoserine.

The protein belongs to the PEPCase type 1 family. Homotetramer. It depends on Mg(2+) as a cofactor. Expressed in all plant organs, with higher levels in stems and leaves.

It localises to the cytoplasm. The catalysed reaction is oxaloacetate + phosphate = phosphoenolpyruvate + hydrogencarbonate. With respect to regulation, by light-reversible phosphorylation. Through the carboxylation of phosphoenolpyruvate (PEP) it forms oxaloacetate, a four-carbon dicarboxylic acid source for the tricarboxylic acid cycle. This chain is Phosphoenolpyruvate carboxylase 2 (PPC2), found in Arabidopsis thaliana (Mouse-ear cress).